Reading from the N-terminus, the 103-residue chain is Large ribosomal subunit protein bL21 (103 aa).

Belongs to the bacterial ribosomal protein bL21 family. In terms of assembly, part of the 50S ribosomal subunit. Contacts protein L20.

Its function is as follows. This protein binds to 23S rRNA in the presence of protein L20. This is Large ribosomal subunit protein bL21 from Paraburkholderia phytofirmans (strain DSM 17436 / LMG 22146 / PsJN) (Burkholderia phytofirmans).